Here is a 642-residue protein sequence, read N- to C-terminus: Tigger transposable element-derived protein 5 (642 aa).

Pro residues-rich tracts occupy residues 1–10 (MYPAGPPAGP) and 19–43 (LPGP…PGPR). The segment at 1-45 (MYPAGPPAGPVPRRGRRPLPGPPAPAPAPVPAARPPPPAPGPRPR) is disordered. Positions 47–98 (AVKMAFRKAYSIKDKLQAIERVKGGERQASVCRDFGVPGGTLRGWLKDEPKL) constitute an HTH psq-type domain. DNA-binding regions (H-T-H motif) lie at residues 74 to 94 (QASV…WLKD) and 145 to 178 (PLIQ…WQKR). An HTH CENPB-type domain is found at 112-185 (QRKKMRLANE…QKRHGISSQR (74 aa)). The disordered stretch occupies residues 185–233 (RFYGEAGPPAPSPAPGPPVKEEPALPSGAGPLPDRAPAPPPPAEGGYGD). Composition is skewed to pro residues over residues 192 to 202 (PPAPSPAPGPP) and 218 to 227 (DRAPAPPPPA). 2 DDE-1 domains span residues 233-357 (DEQI…VLLV) and 410-477 (RAHI…ERCW). The interval 535–587 (LDDDGGPPEGCREEVGPALPPAAPPAPASLPSAMGGGEDEEEATDYGGTSVPT) is disordered. Residues 552-562 (ALPPAAPPAPA) are compositionally biased toward pro residues.

The protein belongs to the tigger transposable element derived protein family.

The protein localises to the nucleus. This chain is Tigger transposable element-derived protein 5 (TIGD5), found in Homo sapiens (Human).